A 30-amino-acid polypeptide reads, in one-letter code: APLEDEDDLELLEKVKRDRKKRLERQGAIN.

It is found in the plastid. It localises to the chloroplast thylakoid lumen. The protein is Thylakoid lumenal 13.3 kDa protein of Spinacia oleracea (Spinach).